Consider the following 616-residue polypeptide: Centrosomal protein of 70 kDa (616 aa).

Coiled-coil stretches lie at residues 96 to 210 (EETT…EEER) and 273 to 335 (NYKG…NIKL). The stretch at 502-535 (NGVFPRMNEVYTRLGEMNNAVRNLQELLELDSSS) is one TPR repeat.

As to quaternary structure, directly interacts with tubulin-gamma; this interaction determines centrosomal localization.

It localises to the cytoplasm. The protein resides in the cytoskeleton. Its subcellular location is the microtubule organizing center. It is found in the centrosome. Functionally, plays a role in the organization of both preexisting and nascent microtubules in interphase cells. During mitosis, required for the organization and orientation of the mitotic spindle. This Mus musculus (Mouse) protein is Centrosomal protein of 70 kDa (Cep70).